The following is a 118-amino-acid chain: Large ribosomal subunit protein bL19 (118 aa).

The protein belongs to the bacterial ribosomal protein bL19 family.

In terms of biological role, this protein is located at the 30S-50S ribosomal subunit interface and may play a role in the structure and function of the aminoacyl-tRNA binding site. The polypeptide is Large ribosomal subunit protein bL19 (Campylobacter jejuni subsp. jejuni serotype O:2 (strain ATCC 700819 / NCTC 11168)).